We begin with the raw amino-acid sequence, 312 residues long: MIIVTGGAGFIGSNIVKALNDEGYTDILVVDNLKDGTKFVNLVDLNIADYMDKEDFIASIVAGDDFGDIDAVFHEGACSSTTEWDGKYMMDNNYQYSKELLHYCLDRQIPFLYASSAATYGGRTDHFIEERKYEAPLNVYGYSKFLFDEYVRQILPEAQSMVCGFRYFNVYGPREGHKGSMASVAFHLNTQVNDGQNPKLFEGSETFQRDFIYVGDVAAVNLWFWRNNVSGIYNCGTGRAESFQAVADAVIAYHNDKDLSVEHIEFPEKLKGRYQAFTQADLTNLRKAGYSAPFKTVAEGVALYMQWLNQDK.

NADP(+) contacts are provided by residues 10 to 11 (FI), 31 to 32 (DN), Lys-38, Lys-53, 75 to 79 (EGACS), and Asn-92. Tyr-140 functions as the Proton acceptor in the catalytic mechanism. Residue Lys-144 participates in NADP(+) binding. Asn-169 contributes to the substrate binding site. Residues Val-170 and Lys-178 each coordinate NADP(+). Catalysis depends on Lys-178, which acts as the Proton acceptor. Substrate is bound by residues Ser-180, His-187, 201–204 (FEGS), Arg-209, and Tyr-274.

Belongs to the NAD(P)-dependent epimerase/dehydratase family. HldD subfamily. In terms of assembly, homopentamer. The cofactor is NADP(+).

It carries out the reaction ADP-D-glycero-beta-D-manno-heptose = ADP-L-glycero-beta-D-manno-heptose. It functions in the pathway nucleotide-sugar biosynthesis; ADP-L-glycero-beta-D-manno-heptose biosynthesis; ADP-L-glycero-beta-D-manno-heptose from D-glycero-beta-D-manno-heptose 7-phosphate: step 4/4. Catalyzes the interconversion between ADP-D-glycero-beta-D-manno-heptose and ADP-L-glycero-beta-D-manno-heptose via an epimerization at carbon 6 of the heptose. The polypeptide is ADP-L-glycero-D-manno-heptose-6-epimerase (Proteus mirabilis (strain HI4320)).